Consider the following 248-residue polypeptide: tRNA (guanine-N(1)-)-methyltransferase (248 aa).

S-adenosyl-L-methionine contacts are provided by residues G113 and 133 to 138 (VGDYVL).

Belongs to the RNA methyltransferase TrmD family. As to quaternary structure, homodimer.

The protein resides in the cytoplasm. It carries out the reaction guanosine(37) in tRNA + S-adenosyl-L-methionine = N(1)-methylguanosine(37) in tRNA + S-adenosyl-L-homocysteine + H(+). Specifically methylates guanosine-37 in various tRNAs. The protein is tRNA (guanine-N(1)-)-methyltransferase of Shewanella oneidensis (strain ATCC 700550 / JCM 31522 / CIP 106686 / LMG 19005 / NCIMB 14063 / MR-1).